A 368-amino-acid chain; its full sequence is UDP-N-acetylglucosamine--N-acetylmuramyl-(pentapeptide) pyrophosphoryl-undecaprenol N-acetylglucosamine transferase (368 aa).

Residues 13–15, Asn-124, Arg-167, Ser-195, and Gln-296 each bind UDP-N-acetyl-alpha-D-glucosamine; that span reads TGG.

It belongs to the glycosyltransferase 28 family. MurG subfamily.

It localises to the cell inner membrane. It carries out the reaction di-trans,octa-cis-undecaprenyl diphospho-N-acetyl-alpha-D-muramoyl-L-alanyl-D-glutamyl-meso-2,6-diaminopimeloyl-D-alanyl-D-alanine + UDP-N-acetyl-alpha-D-glucosamine = di-trans,octa-cis-undecaprenyl diphospho-[N-acetyl-alpha-D-glucosaminyl-(1-&gt;4)]-N-acetyl-alpha-D-muramoyl-L-alanyl-D-glutamyl-meso-2,6-diaminopimeloyl-D-alanyl-D-alanine + UDP + H(+). Its pathway is cell wall biogenesis; peptidoglycan biosynthesis. Its function is as follows. Cell wall formation. Catalyzes the transfer of a GlcNAc subunit on undecaprenyl-pyrophosphoryl-MurNAc-pentapeptide (lipid intermediate I) to form undecaprenyl-pyrophosphoryl-MurNAc-(pentapeptide)GlcNAc (lipid intermediate II). This chain is UDP-N-acetylglucosamine--N-acetylmuramyl-(pentapeptide) pyrophosphoryl-undecaprenol N-acetylglucosamine transferase, found in Maricaulis maris (strain MCS10) (Caulobacter maris).